The primary structure comprises 356 residues: tRNA N6-adenosine threonylcarbamoyltransferase (356 aa).

The Fe cation site is built by His110 and His114. Substrate-binding positions include 132-136 (LVSGG), Asp165, Gly178, Asp182, and Asn288. Residue Asp316 participates in Fe cation binding.

The protein belongs to the KAE1 / TsaD family. It depends on Fe(2+) as a cofactor.

Its subcellular location is the cytoplasm. The catalysed reaction is L-threonylcarbamoyladenylate + adenosine(37) in tRNA = N(6)-L-threonylcarbamoyladenosine(37) in tRNA + AMP + H(+). Required for the formation of a threonylcarbamoyl group on adenosine at position 37 (t(6)A37) in tRNAs that read codons beginning with adenine. Is involved in the transfer of the threonylcarbamoyl moiety of threonylcarbamoyl-AMP (TC-AMP) to the N6 group of A37, together with TsaE and TsaB. TsaD likely plays a direct catalytic role in this reaction. The sequence is that of tRNA N6-adenosine threonylcarbamoyltransferase from Maridesulfovibrio salexigens (strain ATCC 14822 / DSM 2638 / NCIMB 8403 / VKM B-1763) (Desulfovibrio salexigens).